We begin with the raw amino-acid sequence, 397 residues long: MEGLQPVRSLFTRFFQLEAASGLLLIAAAVLALIINNSPLSYLYGGLLEVPVAVQVGALNIAKPLLLWINDGLMALFFLLIGLEVKREVVDGHLSKPSQVILPATAAVGGMVVPALIYWFINRDNPAAVAGWAIPTATDIAFALGVLALLGKRVPVSLKLFLMTLAIIDDLGAIIVIALFYSGTLSSVSLLLAAACLLVLVAMNRLGVIKLGPYMIVGLILWVCVLKSGVHATLAGVALAFCIPLRTRNAESSPLLALEHALHPWVAYAILPIFAFANAGVSLAGMTVDSFTHPVPMGITIGLLLGKTVGVFGLTWVAVKLRLAALPAGAGWGQILGVAILCGIGFTMSLFVGSLAFAPGSSEYAGMDRMGILTGSFFAAVIGYAVTAMASRKTSIA.

12 consecutive transmembrane segments (helical) span residues 15 to 35, 42 to 62, 65 to 85, 101 to 121, 129 to 149, 160 to 180, 183 to 203, 219 to 241, 265 to 285, 299 to 319, 335 to 355, and 370 to 390; these read FQLE…ALII, YLYG…LNIA, LLLW…GLEV, ILPA…YWFI, VAGW…VLAL, LFLM…IALF, GTLS…LVAM, LILW…ALAF, WVAY…SLAG, ITIG…WVAV, ILGV…VGSL, and MGIL…TAMA.

It belongs to the NhaA Na(+)/H(+) (TC 2.A.33) antiporter family.

The protein resides in the cell inner membrane. The enzyme catalyses Na(+)(in) + 2 H(+)(out) = Na(+)(out) + 2 H(+)(in). Na(+)/H(+) antiporter that extrudes sodium in exchange for external protons. This chain is Na(+)/H(+) antiporter NhaA 1, found in Pseudomonas putida (strain ATCC 47054 / DSM 6125 / CFBP 8728 / NCIMB 11950 / KT2440).